The following is a 358-amino-acid chain: Serine/threonine-protein phosphatase 2A activator 2 (358 aa).

As to quaternary structure, interacts with the phosphatase PP2A catalytic subunits PPH21 and PPH22. Forms a ternary complex with PPH21-TAP42.

The protein localises to the cytoplasm. The catalysed reaction is [protein]-peptidylproline (omega=180) = [protein]-peptidylproline (omega=0). In terms of biological role, PPIases accelerate the folding of proteins. It catalyzes the cis-trans isomerization of proline imidic peptide bonds in oligopeptides. Acts as a regulatory subunit for TAP42-associated PP2A-like phosphatases modulating their activity or substrate specificity, probably by inducing a conformational change in the catalytic subunit, a direct target of the PPIase. Can reactivate inactive phosphatase PP2A-phosphatase methylesterase complexes (PP2Ai) in presence of ATP and Mg(2+) by dissociating the inactive form from the complex. Acts also inhibitory at high concentrations. Involved in the regulation of cell cycle progression, mitotic spindle formation and bud morphogenesis. The polypeptide is Serine/threonine-protein phosphatase 2A activator 2 (RRD2) (Saccharomyces cerevisiae (strain ATCC 204508 / S288c) (Baker's yeast)).